The following is a 242-amino-acid chain: Sugar fermentation stimulation protein homolog (242 aa).

The protein belongs to the SfsA family.

In Nitratidesulfovibrio vulgaris (strain DP4) (Desulfovibrio vulgaris), this protein is Sugar fermentation stimulation protein homolog.